We begin with the raw amino-acid sequence, 630 residues long: Phosphomethylpyrimidine synthase (630 aa).

Disordered stretches follow at residues 1 to 22 and 97 to 120; these read MADI…TTGP and AQRE…VPAF. Substrate-binding positions include Asn-224, Met-253, Tyr-282, His-318, 338–340, 379–382, and Glu-418; these read SRG and DGLR. His-422 is a Zn(2+) binding site. Tyr-445 is a binding site for substrate. His-486 is a Zn(2+) binding site. The [4Fe-4S] cluster site is built by Cys-566, Cys-569, and Cys-574.

The protein belongs to the ThiC family. As to quaternary structure, homodimer. Requires [4Fe-4S] cluster as cofactor.

It carries out the reaction 5-amino-1-(5-phospho-beta-D-ribosyl)imidazole + S-adenosyl-L-methionine = 4-amino-2-methyl-5-(phosphooxymethyl)pyrimidine + CO + 5'-deoxyadenosine + formate + L-methionine + 3 H(+). The protein operates within cofactor biosynthesis; thiamine diphosphate biosynthesis. Functionally, catalyzes the synthesis of the hydroxymethylpyrimidine phosphate (HMP-P) moiety of thiamine from aminoimidazole ribotide (AIR) in a radical S-adenosyl-L-methionine (SAM)-dependent reaction. The chain is Phosphomethylpyrimidine synthase from Sphingopyxis alaskensis (strain DSM 13593 / LMG 18877 / RB2256) (Sphingomonas alaskensis).